A 254-amino-acid polypeptide reads, in one-letter code: UPF0246 protein CPE2152 (254 aa).

Belongs to the UPF0246 family.

This is UPF0246 protein CPE2152 from Clostridium perfringens (strain 13 / Type A).